A 258-amino-acid chain; its full sequence is 4-oxalmesaconate hydratase (258 aa).

Zn(2+) contacts are provided by histidine 28, aspartate 31, and histidine 141.

This sequence belongs to the MshB deacetylase family. The cofactor is Zn(2+).

It carries out the reaction 2-hydroxy-4-oxobutane-1,2,4-tricarboxylate = 4-carboxy-2-hydroxy-cis,cis-muconate + H2O. Its function is as follows. Catalyzes the conversion of oxalomesaconic acid enol (OMAenol) to 4-carboxy-4-hydroxy-2-oxoadipic acid (CHA). Mediates the third step of gallate degradation pathway. The chain is 4-oxalmesaconate hydratase (galB) from Pseudomonas putida (strain ATCC 47054 / DSM 6125 / CFBP 8728 / NCIMB 11950 / KT2440).